An 857-amino-acid chain; its full sequence is Protein app1 (857 aa).

In terms of domain architecture, ADF-H spans 6–133 (DTSTHGAEIR…NMDDIIRRVA (128 aa)). Disordered regions lie at residues 167-562 (AKVA…VPQR), 585-622 (EVPSVPQPPVAPVVPEAPSVPQPPVAPVAPEVPSVPQR), and 693-723 (QLNEPVVPPLPPHDETQEPQVGGDVKATEHT). Residues 193–204 (KDSKDNSWDDSS) are compositionally biased toward basic and acidic residues. Over residues 205 to 217 (KQSNTQTANTTSN) the composition is skewed to low complexity. Over residues 229 to 240 (AGRKEKSQENKP) the composition is skewed to basic and acidic residues. 5 stretches are compositionally biased toward polar residues: residues 276-295 (SISTTTTGSSYRSAESSHAP), 371-385 (PPASTTASKQDSPST), 399-409 (KQVSSNETSAQ), 443-452 (KISSFNSKAG), and 498-511 (SSASQKAAQPSVIT). Over residues 522-561 (VVPEAPSVHQPPAAPVAPEVPSAPQRPAAPVVPEAPSVPQ) the composition is skewed to low complexity. Composition is skewed to pro residues over residues 587-596 (PSVPQPPVAP) and 602-611 (PSVPQPPVAP). Low complexity predominate over residues 612–622 (VAPEVPSVPQR). SH3 domains are found at residues 725–785 (PTKT…ITGP) and 800–857 (GPGK…VEEI).

The polypeptide is Protein app1 (app1) (Schizosaccharomyces pombe (strain 972 / ATCC 24843) (Fission yeast)).